We begin with the raw amino-acid sequence, 476 residues long: Transposase for transposon Tn5 (476 aa).

The segment at 1 to 70 (MITSALHRAA…YRFIRNPNVS (70 aa)) is interaction with DNA. Mg(2+) is bound by residues Asp97 and Asp188. 2 interaction with DNA regions span residues 237-255 (YQIS…KRKN) and 319-348 (YTHR…EPDN). Glu326 is a Mg(2+) binding site. Positions 369-476 (SFTLPQALRA…KDLMAQGIKI (108 aa)) are important for dimerization.

The protein belongs to the transposase 11 family. In terms of assembly, monomer. Homodimer of tnp (isoform 1), and heterodimer of tnp (isoform 1) and inh (isoform 2). The cofactor is Mg(2+).

In terms of biological role, mediates transposition of transposon Tn5 by a 'cut and paste' mechanism. First, the monomeric transposase binds the 19 bp inverted DNA repeats flanking the transposon. Then, dimerization of the DNA-bound transposase creates a synaptic DNA complex. After nicking of the first DNA strand, excision of the transposon proceeds through a series of intermediates. The transposase then mediates the insertion of the transposon at a new site by strand transfer. The activity of the wild-type transposase is very low, and is further inhibited by dimerization with the transposase inhibitor (inh). The polypeptide is Transposase for transposon Tn5 (tnpA) (Escherichia coli).